A 322-amino-acid polypeptide reads, in one-letter code: Mas-related G-protein coupled receptor member B5 (322 aa).

Residues 1–34 (MGLTTPAWNINNTVVNGSNNTEHFSCVSKFNTLN) lie on the Extracellular side of the membrane. N-linked (GlcNAc...) asparagine glycosylation is found at N11, N16, and N19. Residues 35 to 55 (FLTVIIAMFGLAGNAIVLWLL) traverse the membrane as a helical segment. Residues 56 to 70 (AFHLPRNAFSVYVCN) are Cytoplasmic-facing. A helical transmembrane segment spans residues 71 to 91 (LACADFLQLCTQILGSLECFL). The Extracellular segment spans residues 92-98 (QLNRRHT). Residues 99–119 (FFLTVVFMFAYLAGLCMIAAI) form a helical membrane-spanning segment. Residues 120–147 (SVERSLSVMWPIWYHCQRPRHTSSIMCA) lie on the Cytoplasmic side of the membrane. Residues 148–168 (LLWAFCLLLNFLLGEGCGLLF) traverse the membrane as a helical segment. The Extracellular portion of the chain corresponds to 169–172 (SDPK). The helical transmembrane segment at 173–193 (YYFCITCALITTALIILLTVV) threads the bilayer. At 194–216 (PSVSSLALLVKMICGSHRIPVTR) the chain is on the cytoplasmic side. The chain crosses the membrane as a helical span at residues 217–237 (FYVTIALTLVVFIFLGLPFGI). Over 238-260 (YSSFLIMFKEFQSIFSYHVLEVT) the chain is Extracellular. Residues 261–281 (IFLSCVNSCANPIIYFLVGSI) traverse the membrane as a helical segment. Residues 282-322 (RQHRLQWQSLKLLLQRAMQDTPEEDSGERVPSQRSGELESV) lie on the Cytoplasmic side of the membrane. Positions 302–322 (TPEEDSGERVPSQRSGELESV) are disordered.

This sequence belongs to the G-protein coupled receptor 1 family. Mas subfamily.

Its subcellular location is the membrane. Its function is as follows. Orphan receptor. Probably involved in the function of nociceptive neurons. May regulate nociceptor function and/or development, including the sensation or modulation of pain. This is Mas-related G-protein coupled receptor member B5 (Mrgprb5) from Mus musculus (Mouse).